Reading from the N-terminus, the 237-residue chain is Uridylate kinase (237 aa).

Residue 11-14 participates in ATP binding; it reads KLSG. Gly53 contacts UMP. Residues Gly54 and Arg58 each coordinate ATP. Residues Asp73 and 134 to 141 each bind UMP; that span reads TGNPFFTT. The ATP site is built by Thr161, Tyr167, and Asp170.

Belongs to the UMP kinase family. In terms of assembly, homohexamer.

The protein resides in the cytoplasm. It catalyses the reaction UMP + ATP = UDP + ADP. Its pathway is pyrimidine metabolism; CTP biosynthesis via de novo pathway; UDP from UMP (UMPK route): step 1/1. Inhibited by UTP. In terms of biological role, catalyzes the reversible phosphorylation of UMP to UDP. The sequence is that of Uridylate kinase from Burkholderia cenocepacia (strain HI2424).